We begin with the raw amino-acid sequence, 391 residues long: Multidrug resistance protein MdtL (391 aa).

The Cytoplasmic segment spans residues 1-3 (MSR). A helical transmembrane segment spans residues 4 to 24 (FLICSFALVLLYPAGIDMYLV). Residues 25–41 (GLPRIAADLNASEAQLH) lie on the Periplasmic side of the membrane. Residues 42 to 62 (IAFSVYLAGMAAAMLFAGKVA) form a helical membrane-spanning segment. Over 63 to 68 (DRSGRK) the chain is Cytoplasmic. A helical transmembrane segment spans residues 69-89 (PVAIPGAALFIIASVFCSLAE). At 90-92 (TST) the chain is on the periplasmic side. A helical membrane pass occupies residues 93-113 (LFLAGRFLQGLGAGCCYVVAF). Residues 114 to 130 (AILRDTLDDRRRAKVLS) are Cytoplasmic-facing. The chain crosses the membrane as a helical span at residues 131 to 151 (LLNGITCIIPVLAPVLGHLIM). At 152 to 157 (LKFPWQ) the chain is on the periplasmic side. Residues 158-178 (SLFWTMAIMGIAVLMLSLFIL) form a helical membrane-spanning segment. Topologically, residues 179–198 (KETRPAAPAASDKSRENSES) are cytoplasmic. The helical transmembrane segment at 199–221 (LLNRFFLSRVVITTLSVSVILTF) threads the bilayer. Over 222–244 (VNTSPVLLMEIMGFERGEYATIM) the chain is Periplasmic. Residues 245-265 (ALTAGVSMTVSFSTPFALGIF) traverse the membrane as a helical segment. Topologically, residues 266–268 (KPR) are cytoplasmic. The helical transmembrane segment at 269–289 (TLMITSQVLFLAAGITLAVSP) threads the bilayer. Over 290–292 (SHA) the chain is Periplasmic. A helical transmembrane segment spans residues 293 to 313 (ISLFGITLICAGFSVGFGVAM). At 314–330 (SQALGPFSLRAGVASST) the chain is on the cytoplasmic side. The chain crosses the membrane as a helical span at residues 331-351 (LGIAQVCGSSLWIWLAAVVGI). The Periplasmic segment spans residues 352-355 (GAWN). A helical transmembrane segment spans residues 356-376 (MLIGILIACSIVSLLLIMFVA). Residues 377-391 (PGRPVAAHEEIHHHA) are Cytoplasmic-facing.

Belongs to the major facilitator superfamily. DHA1 family. MdtL (TC 2.A.1.2.22) subfamily.

The protein localises to the cell inner membrane. This is Multidrug resistance protein MdtL from Shigella dysenteriae serotype 1 (strain Sd197).